The sequence spans 528 residues: 2-isopropylmalate synthase (528 aa).

The Pyruvate carboxyltransferase domain occupies Ile12–Val279. The Mn(2+) site is built by Asp21, His214, His216, and Asn250. Residues Arg401 to Ala528 form a regulatory domain region.

This sequence belongs to the alpha-IPM synthase/homocitrate synthase family. LeuA type 1 subfamily. Homodimer. Requires Mn(2+) as cofactor.

The protein localises to the cytoplasm. The catalysed reaction is 3-methyl-2-oxobutanoate + acetyl-CoA + H2O = (2S)-2-isopropylmalate + CoA + H(+). The protein operates within amino-acid biosynthesis; L-leucine biosynthesis; L-leucine from 3-methyl-2-oxobutanoate: step 1/4. Functionally, catalyzes the condensation of the acetyl group of acetyl-CoA with 3-methyl-2-oxobutanoate (2-ketoisovalerate) to form 3-carboxy-3-hydroxy-4-methylpentanoate (2-isopropylmalate). The sequence is that of 2-isopropylmalate synthase from Stenotrophomonas maltophilia (strain K279a).